Consider the following 816-residue polypeptide: Probable transcriptional regulator SLK2 (816 aa).

2 disordered regions span residues 133 to 153 (HDPS…SQTN) and 166 to 189 (SFFQ…KQDD). Composition is skewed to polar residues over residues 139-153 (LGGS…SQTN) and 166-176 (SFFQDPNNLTQ). The tract at residues 307–554 (PSESSIVYWR…DQKVGPIEAL (248 aa)) is dimerization. Positions 316–330 (RKFVTEYFSPRAKKR) match the Nuclear localization signal motif. 2 stretches are compositionally biased toward polar residues: residues 644-662 (IQQE…QGTS) and 672-711 (PSIS…SGNQ). Positions 644 to 711 (IQQEPSRNRS…QPPSCSSGNQ (68 aa)) are disordered.

Belongs to the adn1/SEU family. As to quaternary structure, forms corepressor complexes with LUH; LUH is the transcription repressor subunit and SLK2 the specific DNA-binding adapters. In terms of tissue distribution, expressed in young flower meristems, ovules and the carpel margin meristem.

Its subcellular location is the nucleus. Probable transcription regulator that functions in the development of the carpel margin meristem similarly to SEUSS (SEU). In association with SEU, supports organ development from meristematic regions by facilitating auxin response and thus organ initiation, and by sustaining meristematic potential through the maintenance of PHABULOSA expression. DNA-binding adapter subunit of the SEU-SLK2 transcriptional corepressor of abiotic stress (e.g. salt and osmotic stress) response genes. The chain is Probable transcriptional regulator SLK2 (SLK2) from Arabidopsis thaliana (Mouse-ear cress).